A 158-amino-acid chain; its full sequence is Protein Smg homolog (158 aa).

Belongs to the Smg family.

In Alteromonas mediterranea (strain DSM 17117 / CIP 110805 / LMG 28347 / Deep ecotype), this protein is Protein Smg homolog.